Reading from the N-terminus, the 212-residue chain is uncharacterized protein (212 aa).

The first 21 residues, 1–21 (MRRLTAFGLALLLLASGVARG), serve as a signal peptide directing secretion.

This sequence to E.coli YfaT and T.maritima TM0986.

This is an uncharacterized protein from Pseudomonas aeruginosa (strain ATCC 15692 / DSM 22644 / CIP 104116 / JCM 14847 / LMG 12228 / 1C / PRS 101 / PAO1).